Here is a 120-residue protein sequence, read N- to C-terminus: Large ribosomal subunit protein uL18 (120 aa).

The tract at residues 1 to 22 (MKTTRKESLKRRHRRIRRKVSG) is disordered. Residues 8-20 (SLKRRHRRIRRKV) are compositionally biased toward basic residues.

The protein belongs to the universal ribosomal protein uL18 family. As to quaternary structure, part of the 50S ribosomal subunit; part of the 5S rRNA/L5/L18/L25 subcomplex. Contacts the 5S and 23S rRNAs.

In terms of biological role, this is one of the proteins that bind and probably mediate the attachment of the 5S RNA into the large ribosomal subunit, where it forms part of the central protuberance. In Crocosphaera subtropica (strain ATCC 51142 / BH68) (Cyanothece sp. (strain ATCC 51142)), this protein is Large ribosomal subunit protein uL18.